Reading from the N-terminus, the 127-residue chain is UPF0738 protein Bsph_1225 (127 aa).

It belongs to the UPF0738 family.

This Lysinibacillus sphaericus (strain C3-41) protein is UPF0738 protein Bsph_1225.